Consider the following 421-residue polypeptide: UDP-N-acetylglucosamine 1-carboxyvinyltransferase 1 (421 aa).

A phosphoenolpyruvate-binding site is contributed by 22–23 (KN). UDP-N-acetyl-alpha-D-glucosamine is bound at residue Arg-95. Cys-119 serves as the catalytic Proton donor. Cys-119 is modified (2-(S-cysteinyl)pyruvic acid O-phosphothioketal). Residues 124–128 (RPIEQ), Asp-308, and Val-330 each bind UDP-N-acetyl-alpha-D-glucosamine.

This sequence belongs to the EPSP synthase family. MurA subfamily.

The protein resides in the cytoplasm. It catalyses the reaction phosphoenolpyruvate + UDP-N-acetyl-alpha-D-glucosamine = UDP-N-acetyl-3-O-(1-carboxyvinyl)-alpha-D-glucosamine + phosphate. Its pathway is cell wall biogenesis; peptidoglycan biosynthesis. Cell wall formation. Adds enolpyruvyl to UDP-N-acetylglucosamine. The polypeptide is UDP-N-acetylglucosamine 1-carboxyvinyltransferase 1 (Staphylococcus aureus (strain bovine RF122 / ET3-1)).